Consider the following 499-residue polypeptide: Glutamate--tRNA ligase (499 aa).

The 'HIGH' region signature appears at 10–20 (PSPTGTPHVGM). A 'KMSKS' region motif is present at residues 255 to 259 (KLSKR). Lys258 serves as a coordination point for ATP.

It belongs to the class-I aminoacyl-tRNA synthetase family. Glutamate--tRNA ligase type 1 subfamily. As to quaternary structure, monomer.

The protein localises to the cytoplasm. The catalysed reaction is tRNA(Glu) + L-glutamate + ATP = L-glutamyl-tRNA(Glu) + AMP + diphosphate. Its function is as follows. Catalyzes the attachment of glutamate to tRNA(Glu) in a two-step reaction: glutamate is first activated by ATP to form Glu-AMP and then transferred to the acceptor end of tRNA(Glu). This chain is Glutamate--tRNA ligase, found in Corynebacterium urealyticum (strain ATCC 43042 / DSM 7109).